Consider the following 2378-residue polypeptide: Dimodular nonribosomal peptide synthase (2378 aa).

Carrier domains lie at A961 to Q1036 and G2036 to S2111. 2 positions are modified to O-(pantetheine 4'-phosphoryl)serine: S996 and S2071.

It belongs to the ATP-dependent AMP-binding enzyme family. Requires pantetheine 4'-phosphate as cofactor.

The enzyme catalyses holo-[peptidyl-carrier protein] + L-threonine + ATP = L-threonyl-[peptidyl-carrier protein] + AMP + diphosphate. The catalysed reaction is holo-[peptidyl-carrier protein] + glycine + ATP = glycyl-[peptidyl-carrier protein] + AMP + diphosphate. It participates in siderophore biosynthesis; bacillibactin biosynthesis. Specifically adenylates L-threonine and, to a lesser extent, glycine and covalently loads both amino acids onto their corresponding peptidyl carrier domains. This chain is Dimodular nonribosomal peptide synthase (dhbF), found in Bacillus subtilis (strain 168).